Reading from the N-terminus, the 364-residue chain is FMNH(2)-dependent dimethylsulfone monooxygenase (364 aa).

This sequence belongs to the SsuD family.

It catalyses the reaction dimethyl sulfone + FMNH2 + O2 = methanesulfinate + FMN + formaldehyde + H2O + 2 H(+). Involved in the dimethyl sulfide degradation pathway. Catalyzes the oxidation of dimethylsulfone (DMSO2) to yield methanesulfinate, which is oxidized spontaneously to methanesulfonate in the presence of dioxygen and FMNH(2). The polypeptide is FMNH(2)-dependent dimethylsulfone monooxygenase (Pseudomonas fluorescens (strain Pf0-1)).